Reading from the N-terminus, the 238-residue chain is Uridylate kinase (238 aa).

12-15 (KLSG) lines the ATP pocket. Glycine 54 contacts UMP. ATP is bound by residues glycine 55 and arginine 59. Residues aspartate 74 and 135 to 142 (TGNPFFTT) each bind UMP. The ATP site is built by threonine 162, tyrosine 168, and aspartate 171.

Belongs to the UMP kinase family. Homohexamer.

It localises to the cytoplasm. The enzyme catalyses UMP + ATP = UDP + ADP. The protein operates within pyrimidine metabolism; CTP biosynthesis via de novo pathway; UDP from UMP (UMPK route): step 1/1. Inhibited by UTP. Its function is as follows. Catalyzes the reversible phosphorylation of UMP to UDP. In Bordetella parapertussis (strain 12822 / ATCC BAA-587 / NCTC 13253), this protein is Uridylate kinase.